The sequence spans 449 residues: Probable glycosyltransferase 5 (449 aa).

The span at 1 to 14 shows a compositional bias: basic and acidic residues; that stretch reads MMEKHGGKVTSDRR. Residues 1-24 are disordered; sequence MMEKHGGKVTSDRRAGRRQHGQRC. Over 1 to 28 the chain is Cytoplasmic; that stretch reads MMEKHGGKVTSDRRAGRRQHGQRCSASD. Residues 29-49 form a helical; Signal-anchor for type II membrane protein membrane-spanning segment; it reads AAPLVVVVILIVAALFLILGP. The Lumenal portion of the chain corresponds to 50 to 449; sequence TGSSSFTVPR…HPTFRAARPT (400 aa). The tract at residues 74-109 is disordered; sequence APPPPPPPAQMQAGANASSEEDSGLPPPRQLTDPPY. Residues N89, N413, and N422 are each glycosylated (N-linked (GlcNAc...) asparagine).

Belongs to the glycosyltransferase 34 family.

The protein resides in the golgi apparatus membrane. In terms of biological role, probable glycosyltransferase that may be involved in the biosynthesis of xyloglucan. The sequence is that of Probable glycosyltransferase 5 from Oryza sativa subsp. japonica (Rice).